Reading from the N-terminus, the 333-residue chain is Beta-ketoacyl-[acyl-carrier-protein] synthase III (333 aa).

Residues cysteine 116 and histidine 258 contribute to the active site. Positions 259–263 are ACP-binding; it reads QANQR. Asparagine 288 is an active-site residue.

The protein belongs to the thiolase-like superfamily. FabH family. As to quaternary structure, homodimer.

It is found in the cytoplasm. It catalyses the reaction malonyl-[ACP] + acetyl-CoA + H(+) = 3-oxobutanoyl-[ACP] + CO2 + CoA. The protein operates within lipid metabolism; fatty acid biosynthesis. Functionally, catalyzes the condensation reaction of fatty acid synthesis by the addition to an acyl acceptor of two carbons from malonyl-ACP. Catalyzes the first condensation reaction which initiates fatty acid synthesis and may therefore play a role in governing the total rate of fatty acid production. Possesses both acetoacetyl-ACP synthase and acetyl transacylase activities. Its substrate specificity determines the biosynthesis of branched-chain and/or straight-chain of fatty acids. This is Beta-ketoacyl-[acyl-carrier-protein] synthase III from Microcystis aeruginosa (strain NIES-843 / IAM M-2473).